A 336-amino-acid polypeptide reads, in one-letter code: Ketol-acid reductoisomerase (NADP(+)) (336 aa).

Positions Met-1 to Thr-182 constitute a KARI N-terminal Rossmann domain. NADP(+)-binding positions include Tyr-25 to Gln-28, Arg-48, Ser-51, Ser-53, and Asp-83 to Gln-86. Residue His-108 is part of the active site. Gly-134 provides a ligand contact to NADP(+). Positions Thr-183–Leu-328 constitute a KARI C-terminal knotted domain. Asp-191, Glu-195, Glu-227, and Glu-231 together coordinate Mg(2+). Position 252 (Ser-252) interacts with substrate.

The protein belongs to the ketol-acid reductoisomerase family. It depends on Mg(2+) as a cofactor.

The catalysed reaction is (2R)-2,3-dihydroxy-3-methylbutanoate + NADP(+) = (2S)-2-acetolactate + NADPH + H(+). It catalyses the reaction (2R,3R)-2,3-dihydroxy-3-methylpentanoate + NADP(+) = (S)-2-ethyl-2-hydroxy-3-oxobutanoate + NADPH + H(+). It functions in the pathway amino-acid biosynthesis; L-isoleucine biosynthesis; L-isoleucine from 2-oxobutanoate: step 2/4. It participates in amino-acid biosynthesis; L-valine biosynthesis; L-valine from pyruvate: step 2/4. Functionally, involved in the biosynthesis of branched-chain amino acids (BCAA). Catalyzes an alkyl-migration followed by a ketol-acid reduction of (S)-2-acetolactate (S2AL) to yield (R)-2,3-dihydroxy-isovalerate. In the isomerase reaction, S2AL is rearranged via a Mg-dependent methyl migration to produce 3-hydroxy-3-methyl-2-ketobutyrate (HMKB). In the reductase reaction, this 2-ketoacid undergoes a metal-dependent reduction by NADPH to yield (R)-2,3-dihydroxy-isovalerate. The sequence is that of Ketol-acid reductoisomerase (NADP(+)) from Thermotoga petrophila (strain ATCC BAA-488 / DSM 13995 / JCM 10881 / RKU-1).